A 258-amino-acid chain; its full sequence is L-rhamnose-1-dehydrogenase (258 aa).

Positions 19, 68, and 95 each coordinate NADP(+). Residues Ser147 and Tyr161 each act as proton donor in the active site. Positions 161, 165, 194, and 196 each coordinate NADP(+). Lys165 functions as the Lowers pKa of active site Tyr in the catalytic mechanism.

Belongs to the short-chain dehydrogenases/reductases (SDR) family.

The catalysed reaction is L-rhamnofuranose + NAD(+) = L-rhamnono-1,4-lactone + NADH + H(+). In terms of biological role, NAD-dependent dehydrogenase that has high activity with L-rhamnose and L-lyxose, and shows only low activity with L-mannose. Has no activity with NADP. Catalyzes the first step in an alternative pathway for rhamnose utilization that does not involve phosphorylated intermediates. The polypeptide is L-rhamnose-1-dehydrogenase (DHG2) (Scheffersomyces stipitis (strain ATCC 58785 / CBS 6054 / NBRC 10063 / NRRL Y-11545) (Yeast)).